A 350-amino-acid chain; its full sequence is Small ribosomal subunit biogenesis GTPase RsgA (350 aa).

Over residues 1–17 the composition is skewed to polar residues; it reads MSKNKLSKGQQRRVQAN. Residues 1–35 are disordered; the sequence is MSKNKLSKGQQRRVQANHQRRLRTDRKPELDDSQL. One can recognise a CP-type G domain in the interval 103-273; that stretch reads TSVLTRPDLY…VIDSPGVREF (171 aa). Residues 159–162 and 213–221 each bind GTP; these read NKID and GQSGVGKSS. Zn(2+) contacts are provided by Cys297, Cys302, His304, and Cys310.

It belongs to the TRAFAC class YlqF/YawG GTPase family. RsgA subfamily. Monomer. Associates with 30S ribosomal subunit, binds 16S rRNA. Zn(2+) is required as a cofactor.

The protein resides in the cytoplasm. Functionally, one of several proteins that assist in the late maturation steps of the functional core of the 30S ribosomal subunit. Helps release RbfA from mature subunits. May play a role in the assembly of ribosomal proteins into the subunit. Circularly permuted GTPase that catalyzes slow GTP hydrolysis, GTPase activity is stimulated by the 30S ribosomal subunit. The polypeptide is Small ribosomal subunit biogenesis GTPase RsgA (Yersinia enterocolitica serotype O:8 / biotype 1B (strain NCTC 13174 / 8081)).